Consider the following 525-residue polypeptide: Apolipoprotein N-acyltransferase 2 (525 aa).

6 helical membrane-spanning segments follow: residues 25-45 (ILNFGSAIAGFSGLVLVYYAL), 56-76 (FLYGFFVSFVHLMSSFWLAFF), 81-101 (IFTLGASTLAYFFIAMPFGFL), 115-135 (FFFAAIWLLWEFAKSTGFLAY), 153-173 (FVDITGVWGLSFIVPLIAACL), and 200-220 (LIFTAFLVLIINIYGITILSI). Residues 228–486 (LNTVIVQQNT…AESVYTEVPV (259 aa)) form the CN hydrolase domain. Glu274 functions as the Proton acceptor in the catalytic mechanism. Lys339 is a catalytic residue. Cys397 functions as the Nucleophile in the catalytic mechanism. A helical membrane pass occupies residues 495–515 (ASYKDWLPIMMFLILIFNIFL).

The protein belongs to the CN hydrolase family. Apolipoprotein N-acyltransferase subfamily.

It is found in the cell inner membrane. It catalyses the reaction N-terminal S-1,2-diacyl-sn-glyceryl-L-cysteinyl-[lipoprotein] + a glycerophospholipid = N-acyl-S-1,2-diacyl-sn-glyceryl-L-cysteinyl-[lipoprotein] + a 2-acyl-sn-glycero-3-phospholipid + H(+). Its pathway is protein modification; lipoprotein biosynthesis (N-acyl transfer). Catalyzes the phospholipid dependent N-acylation of the N-terminal cysteine of apolipoprotein, the last step in lipoprotein maturation. The chain is Apolipoprotein N-acyltransferase 2 from Treponema denticola (strain ATCC 35405 / DSM 14222 / CIP 103919 / JCM 8153 / KCTC 15104).